A 729-amino-acid polypeptide reads, in one-letter code: Methionine--tRNA ligase (729 aa).

The 'HIGH' region signature appears at 12–22 (PYVNNIPHLGN). Zn(2+) is bound by residues cysteine 143, cysteine 146, cysteine 155, and cysteine 158. The short motif at 330 to 334 (KFSKS) is the 'KMSKS' region element. Lysine 333 contributes to the ATP binding site. The 106-residue stretch at 565–670 (FSEQVCLKVV…DNPIPGERII (106 aa)) folds into the tRNA-binding domain.

It belongs to the class-I aminoacyl-tRNA synthetase family. MetG type 1 subfamily. Homodimer. It depends on Zn(2+) as a cofactor.

The protein localises to the cytoplasm. It catalyses the reaction tRNA(Met) + L-methionine + ATP = L-methionyl-tRNA(Met) + AMP + diphosphate. Is required not only for elongation of protein synthesis but also for the initiation of all mRNA translation through initiator tRNA(fMet) aminoacylation. The polypeptide is Methionine--tRNA ligase (Borrelia hermsii (strain HS1 / DAH)).